The sequence spans 132 residues: Small ribosomal subunit protein uS8 (132 aa).

The protein belongs to the universal ribosomal protein uS8 family. As to quaternary structure, part of the 30S ribosomal subunit. Contacts proteins S5 and S12.

Its function is as follows. One of the primary rRNA binding proteins, it binds directly to 16S rRNA central domain where it helps coordinate assembly of the platform of the 30S subunit. This is Small ribosomal subunit protein uS8 from Rhodopseudomonas palustris (strain BisA53).